Reading from the N-terminus, the 117-residue chain is MHEMSIAMSIVDAVDAKARAEGAVRISLIELKIGKLAGILPEALRFCFSAAATGSLAGQAQLVIDEPDGRGRCSDCGHEFSVDFYYARCPECGSLRIVIVSGEEFLIQSIIIDEEGE.

Ni(2+) is bound at residue histidine 2. Residues cysteine 73, cysteine 76, cysteine 89, and cysteine 92 each contribute to the Zn(2+) site.

This sequence belongs to the HypA/HybF family.

In terms of biological role, involved in the maturation of [NiFe] hydrogenases. Required for nickel insertion into the metal center of the hydrogenase. In Chlorobium luteolum (strain DSM 273 / BCRC 81028 / 2530) (Pelodictyon luteolum), this protein is Hydrogenase maturation factor HypA.